Consider the following 101-residue polypeptide: Small ribosomal subunit protein uS14 (101 aa).

It belongs to the universal ribosomal protein uS14 family. In terms of assembly, part of the 30S ribosomal subunit. Contacts proteins S3 and S10.

Its function is as follows. Binds 16S rRNA, required for the assembly of 30S particles and may also be responsible for determining the conformation of the 16S rRNA at the A site. In Paramagnetospirillum magneticum (strain ATCC 700264 / AMB-1) (Magnetospirillum magneticum), this protein is Small ribosomal subunit protein uS14.